The primary structure comprises 98 residues: Small ribosomal subunit protein eS24 (98 aa).

It belongs to the eukaryotic ribosomal protein eS24 family.

This Thermococcus gammatolerans (strain DSM 15229 / JCM 11827 / EJ3) protein is Small ribosomal subunit protein eS24.